Here is a 225-residue protein sequence, read N- to C-terminus: UPF0758 protein Sden_0326 (225 aa).

Residues 102–224 (ILTNPDLTRD…IVSFAERGWL (123 aa)) enclose the MPN domain. H173, H175, and D186 together coordinate Zn(2+). Positions 173-186 (HNHPSGIAEPSQAD) match the JAMM motif motif.

This sequence belongs to the UPF0758 family.

In Shewanella denitrificans (strain OS217 / ATCC BAA-1090 / DSM 15013), this protein is UPF0758 protein Sden_0326.